We begin with the raw amino-acid sequence, 197 residues long: Large ribosomal subunit protein bL25 (197 aa).

The protein belongs to the bacterial ribosomal protein bL25 family. CTC subfamily. In terms of assembly, part of the 50S ribosomal subunit; part of the 5S rRNA/L5/L18/L25 subcomplex. Contacts the 5S rRNA. Binds to the 5S rRNA independently of L5 and L18.

This is one of the proteins that binds to the 5S RNA in the ribosome where it forms part of the central protuberance. The protein is Large ribosomal subunit protein bL25 of Pseudomonas putida (strain GB-1).